The sequence spans 156 residues: MPRKGNVQKREVLPDPIYNSKLVTRLINHMMMDGKRGTSTKIIYGAFDIIKNETGNDPVETFEEAMKNIMPVLEVKARRVGGSNYQVPIEVRPDRRTTLGLRWLVQYSRLRGEHTMVERLAREIMDAANNTGAAVKKREDTHRMADANRAFAHYRW.

The protein belongs to the universal ribosomal protein uS7 family. Part of the 30S ribosomal subunit. Contacts proteins S9 and S11.

Its function is as follows. One of the primary rRNA binding proteins, it binds directly to 16S rRNA where it nucleates assembly of the head domain of the 30S subunit. Is located at the subunit interface close to the decoding center, probably blocks exit of the E-site tRNA. The sequence is that of Small ribosomal subunit protein uS7 from Levilactobacillus brevis (strain ATCC 367 / BCRC 12310 / CIP 105137 / JCM 1170 / LMG 11437 / NCIMB 947 / NCTC 947) (Lactobacillus brevis).